A 276-amino-acid polypeptide reads, in one-letter code: Eukaryotic translation initiation factor 3 subunit G-2 (276 aa).

The region spanning 196–274 (SAVRISNLSE…LILCVEWSKP (79 aa)) is the RRM domain.

Belongs to the eIF-3 subunit G family. In terms of assembly, component of the eukaryotic translation initiation factor 3 (eIF-3) complex. The eIF-3 complex interacts with pix.

Its subcellular location is the cytoplasm. Functionally, RNA-binding component of the eukaryotic translation initiation factor 3 (eIF-3) complex, which is involved in protein synthesis of a specialized repertoire of mRNAs and, together with other initiation factors, stimulates binding of mRNA and methionyl-tRNAi to the 40S ribosome. The eIF-3 complex specifically targets and initiates translation of a subset of mRNAs involved in cell proliferation. This subunit can bind 18S rRNA. This Drosophila persimilis (Fruit fly) protein is Eukaryotic translation initiation factor 3 subunit G-2.